A 176-amino-acid polypeptide reads, in one-letter code: MKYNNIIFLGLCLGLTTYSALSADSVIKISGRVLDYGCTVSSDSLNFTVDLQKNSARQFPTTGSTSPAVPFQITLSECSKGTTGVRVAFNGIEDAENNTLLKLDEGSNTASGLGIEILDANMRPVKLNDLHAGMQWIPLVPEQNNILPYSARLKSTQKSVNPGLVRASATFTLEFQ.

The N-terminal stretch at 1–22 (MKYNNIIFLGLCLGLTTYSALS) is a signal peptide. Cys-38 and Cys-78 are oxidised to a cystine.

Belongs to the fimbrial protein family.

Its subcellular location is the fimbrium. This is an uncharacterized protein from Escherichia coli (strain K12).